A 191-amino-acid chain; its full sequence is CASP-like protein 4C3 (191 aa).

Topologically, residues 1-29 are cytoplasmic; sequence METGDSAVKSSQDVHYYGKSTAQKHRRSN. Residues 30–50 form a helical membrane-spanning segment; that stretch reads GIILIFRALTFSFSLTSVIVM. Topologically, residues 51–72 are extracellular; sequence GTNRHRIDAQSRVAWYDFDPFR. Residues 73 to 93 traverse the membrane as a helical segment; that stretch reads YVLAVNAIICIYSFVEIWLAV. Residues 94 to 116 lie on the Cytoplasmic side of the membrane; it reads YTYLKDTLFLPETFQVWFDYGHD. A helical membrane pass occupies residues 117 to 137; that stretch reads QGFAYLLFSANSAGIAMAQLL. The Extracellular segment spans residues 138-162; sequence QSGNSLIHGAYRCSDAGVFCTQARA. The chain crosses the membrane as a helical span at residues 163-183; sequence SIGLGFGAFLFLALSSLLTGL. The Cytoplasmic portion of the chain corresponds to 184–191; sequence RVARWYFS.

The protein belongs to the Casparian strip membrane proteins (CASP) family. In terms of assembly, homodimer and heterodimers.

The protein localises to the cell membrane. The protein is CASP-like protein 4C3 of Physcomitrium patens (Spreading-leaved earth moss).